The sequence spans 103 residues: Large ribosomal subunit protein bL21 (103 aa).

It belongs to the bacterial ribosomal protein bL21 family. As to quaternary structure, part of the 50S ribosomal subunit. Contacts protein L20.

Functionally, this protein binds to 23S rRNA in the presence of protein L20. The protein is Large ribosomal subunit protein bL21 of Pseudomonas fluorescens (strain Pf0-1).